Here is a 255-residue protein sequence, read N- to C-terminus: Leucyl/phenylalanyl-tRNA--protein transferase (255 aa).

Belongs to the L/F-transferase family.

The protein resides in the cytoplasm. It carries out the reaction N-terminal L-lysyl-[protein] + L-leucyl-tRNA(Leu) = N-terminal L-leucyl-L-lysyl-[protein] + tRNA(Leu) + H(+). It catalyses the reaction N-terminal L-arginyl-[protein] + L-leucyl-tRNA(Leu) = N-terminal L-leucyl-L-arginyl-[protein] + tRNA(Leu) + H(+). The catalysed reaction is L-phenylalanyl-tRNA(Phe) + an N-terminal L-alpha-aminoacyl-[protein] = an N-terminal L-phenylalanyl-L-alpha-aminoacyl-[protein] + tRNA(Phe). In terms of biological role, functions in the N-end rule pathway of protein degradation where it conjugates Leu, Phe and, less efficiently, Met from aminoacyl-tRNAs to the N-termini of proteins containing an N-terminal arginine or lysine. The polypeptide is Leucyl/phenylalanyl-tRNA--protein transferase (Burkholderia thailandensis (strain ATCC 700388 / DSM 13276 / CCUG 48851 / CIP 106301 / E264)).